The chain runs to 287 residues: Lycopene elongase/hydratase (287 aa).

A run of 7 helical transmembrane segments spans residues 15–35, 37–57, 97–117, 137–157, 166–186, 218–238, and 265–285; these read ISWVNTAYPFGLAYLLNAGEI, WLFWLGIVFFLIPYNIAMYGI, IPFLVILFIFGTWMSSLWLTI, FIDALTSSTHFTSPALIGATI, MWIALGSFFLWGMASQILGAV, LLAAVLVTTLPNPAWIIGIAI, and VFLWLNYFVGAVITILLIAIH.

This sequence belongs to the UbiA prenyltransferase family.

It localises to the cell membrane. It carries out the reaction all-trans-lycopene + dimethylallyl diphosphate + A + H2O = nonaflavuxanthin + AH2 + diphosphate. The catalysed reaction is nonaflavuxanthin + dimethylallyl diphosphate + A + H2O = flavuxanthin + AH2 + diphosphate. It functions in the pathway carotenoid biosynthesis. Functionally, catalyzes the elongation of the C(40) carotenoid all-trans-lycopene to the acyclic C(50) carotenoid flavuxanthin during decaprenoxanthin biosynthesis. Acts as a bifunctional enzyme that catalyzes the elongation of lycopene by attaching a C(5) isoprene unit at C-2, as well as the hydroxylation of the new isoprene unit. The enzyme acts at both ends of the substrate, forming the C(50) carotenoid flavuxanthin via the C(45) intermediate nonaflavuxanthin. This chain is Lycopene elongase/hydratase, found in Corynebacterium glutamicum (Brevibacterium saccharolyticum).